Here is a 177-residue protein sequence, read N- to C-terminus: Large ribosomal subunit protein uL6 (177 aa).

It belongs to the universal ribosomal protein uL6 family. As to quaternary structure, part of the 50S ribosomal subunit.

Its function is as follows. This protein binds to the 23S rRNA, and is important in its secondary structure. It is located near the subunit interface in the base of the L7/L12 stalk, and near the tRNA binding site of the peptidyltransferase center. This is Large ribosomal subunit protein uL6 from Cronobacter sakazakii (strain ATCC BAA-894) (Enterobacter sakazakii).